The sequence spans 56 residues: Ovomucoid (56 aa).

The Kazal-like domain occupies 6–56; sequence VDCSEYPKPACTLEYRPLCGSDNKTYANKCNFCNAVVESNGTLTLSHFGKC. Disulfide bonds link Cys8–Cys38, Cys16–Cys35, and Cys24–Cys56. The N-linked (GlcNAc...) asparagine glycan is linked to Asn45.

The protein resides in the secreted. This Callipepla californica (California quail) protein is Ovomucoid.